The sequence spans 1006 residues: Cytosolic carboxypeptidase 3 (1006 aa).

Residues 304 to 576 form the Peptidase M14 domain; sequence YPYTYSNLQE…HFCDSLLDYC (273 aa). Zn(2+) contacts are provided by His-368, Glu-371, and His-464. The Proton donor/acceptor role is filled by Glu-540. A disordered region spans residues 790-810; that stretch reads ESHHQLKSKAKRCSSFQSKRT.

The protein belongs to the peptidase M14 family. Zn(2+) serves as cofactor. As to expression, widely expressed. Expressed abundantly in tissues with m otile cilia such as testis, lung and trachea. Abundantly expressed in pituitary and kidney, moderately expressed in brain, eye, fat, pancreas, stomach, and adrenal.

The protein localises to the cytoplasm. It localises to the cytosol. The enzyme catalyses (L-glutamyl)(n+1)-gamma-L-glutamyl-L-glutamyl-[protein] + H2O = (L-glutamyl)(n)-gamma-L-glutamyl-L-glutamyl-[protein] + L-glutamate. In terms of biological role, metallocarboxypeptidase that mediates deglutamylation of tubulin and non-tubulin target proteins. Catalyzes the removal of polyglutamate side chains present on the gamma-carboxyl group of glutamate residues within the C-terminal tail of tubulin protein. Specifically cleaves tubulin long-side-chains, while it is not able to remove the branching point glutamate. Also catalyzes the removal of polyglutamate residues from the carboxy-terminus of non-tubulin proteins such as MYLK. May catalyze the hydrolysis of aspartate from the carboxy-terminus of target proteins. Does not show detyrosinase or deglycylase activities from the carboxy-terminus of target proteins. This Mus musculus (Mouse) protein is Cytosolic carboxypeptidase 3.